The primary structure comprises 413 residues: Oxidoreductase vrtI (413 aa).

The 107-residue stretch at D235–A341 folds into the Fe2OG dioxygenase domain. Fe cation is bound by residues H262, D264, and H319. Residue R332 participates in 2-oxoglutarate binding.

The protein belongs to the iron/ascorbate-dependent oxidoreductase family.

It participates in secondary metabolite biosynthesis; terpenoid biosynthesis. Its function is as follows. Oxidoreductase; part of the gene cluster that mediates the biosynthesis of viridicatumtoxin, a tetracycline-like fungal meroterpenoid with a unique, fused spirobicyclic ring system. The first step of the pathway is the production of the malonamoyl-CoA starter unit for the polyketide synthase vrtA. The aldolase vrtJ may be involved in the synthesis of the malonamate substrate for malonamoyl-CoA synthetase vrtB. The polyketide synthase vrtA then may utilize the malonamoyl-CoA starter unit, followed by sequential condensation of eight malonyl-CoA units to form the polyketide backbone. The cyclization of the last ring could be mediated by the lactamase-like protein vrtG. The proposed post-PKS tailoring steps are a hydroxylation at C5 catalyzed the cytochrome P450 monooxygenase vrtE, a hydroxylation at C12a catalyzed by VrtH and/or VrtI, and an O-methylation by the O-methyltransferase vrtF. VrtC is then proposed to catalyze the transfer of a geranyl group synthesized by vrtD to the aromatic C ring of the tetracyclic polyketide intermediate of viridicatumtoxin to yield previridicatumtoxin. Finally, the cytochrome P450 monooxygenase vrtK catalyzes the spirocyclization of the geranyl moiety of previridicatumtoxin to afford viridicatumtoxin. The sequence is that of Oxidoreductase vrtI from Penicillium aethiopicum.